Here is a 589-residue protein sequence, read N- to C-terminus: MPPSGRFDRTIALAGTGHLKIGNFVIKETIGKGAFGAVKRGTHIQTGYDVAIKILNRGRMKGLGTVNKTRNEIDNLQKLTHPHITRLFRVISTPSDIFLVMELVSGGELFSYITRKGALPIRESRRYFQQIISGVSYCHNHMIVHRDLKPENLLLDANKNIKIADFGLSNYMTDGDLLSTACGSPNYAAPELISNKLYVGPEVDLWSCGVILYAMLCGTLPFDDQNVPTLFAKIKSGRYTVPYSMEKQAADLISTMLQVDPVKRADVKRIVNHSWFRIDLPYYLFPECENESSIVDIDVVQSVAEKFDVKEEDVTGALLAEDHHHFLCIAYRLEVNHKRNADESSQKAMEDFWEIGKTMKMGSTSLPVGATTKTNVGRKILEGLKKEQKKLTWNLGIRACLDPVETMKHVFLSLKSVDMEWKVLSMYHIIVRSKPTPINPDPVKVSLQLFALDKKENNKGYLLDFKGLTEDEEAVPPSRCRSRAASVSVTLAKSKSDLNGNSSKVPMSPLSPMSPISPSVNIPKVRVDDADASLKSSLNSSIYMADIENSMESLDEVSTQSSEPEAPIRSQTMEFFATCHIIMQALLAE.

In terms of domain architecture, Protein kinase spans 24–276; that stretch reads FVIKETIGKG…VKRIVNHSWF (253 aa). Residues 30–38 and Lys53 contribute to the ATP site; that span reads IGKGAFGAV. The active-site Proton acceptor is the Asp147.

It belongs to the protein kinase superfamily. CAMK Ser/Thr protein kinase family. SNF1 subfamily.

The enzyme catalyses L-seryl-[protein] + ATP = O-phospho-L-seryl-[protein] + ADP + H(+). It catalyses the reaction L-threonyl-[protein] + ATP = O-phospho-L-threonyl-[protein] + ADP + H(+). Its function is as follows. Probably does not act as a sensor that couples lifespan to information about energy levels and insulin-like signals. Together with aak-2, involved in the establishment of germline stem cell (GSC) quiescence during dauer development. Plays a role in the maintenance of glycogen stores which are necessary for resistance to hyperosmotic stress. The chain is 5'-AMP-activated protein kinase catalytic subunit alpha-1 (aak-1) from Caenorhabditis elegans.